The chain runs to 887 residues: Valine--tRNA ligase (887 aa).

The short motif at 45–55 (PNVTGILHMGH) is the 'HIGH' region element. Positions 528-532 (KMSKS) match the 'KMSKS' region motif. An ATP-binding site is contributed by K531. Residues 817–887 (TGLLNNEAEI…LKESLKSFEE (71 aa)) are a coiled coil.

This sequence belongs to the class-I aminoacyl-tRNA synthetase family. ValS type 1 subfamily. In terms of assembly, monomer.

Its subcellular location is the cytoplasm. The catalysed reaction is tRNA(Val) + L-valine + ATP = L-valyl-tRNA(Val) + AMP + diphosphate. Functionally, catalyzes the attachment of valine to tRNA(Val). As ValRS can inadvertently accommodate and process structurally similar amino acids such as threonine, to avoid such errors, it has a 'posttransfer' editing activity that hydrolyzes mischarged Thr-tRNA(Val) in a tRNA-dependent manner. This Fusobacterium nucleatum subsp. nucleatum (strain ATCC 25586 / DSM 15643 / BCRC 10681 / CIP 101130 / JCM 8532 / KCTC 2640 / LMG 13131 / VPI 4355) protein is Valine--tRNA ligase.